A 132-amino-acid polypeptide reads, in one-letter code: Fatty acid-binding protein, intestinal (132 aa).

Ala-2 bears the N-acetylalanine mark. 2 residues coordinate hexadecanoate: Trp-83 and Arg-107. Positions 83 and 107 each coordinate tetradecanoate.

It belongs to the calycin superfamily. Fatty-acid binding protein (FABP) family.

It is found in the cytoplasm. Its function is as follows. FABPs are thought to play a role in the intracellular transport of long-chain fatty acids and their acyl-CoA esters. This is Fatty acid-binding protein, intestinal (fabp2) from Xenopus laevis (African clawed frog).